We begin with the raw amino-acid sequence, 96 residues long: Mitochondrial import inner membrane translocase subunit Tim13-A (96 aa).

Positions Cys47–Cys70 match the Twin CX3C motif motif. Cystine bridges form between Cys47-Cys70 and Cys51-Cys66.

The protein belongs to the small Tim family. In terms of assembly, heterohexamer; composed of 3 copies of TIMM8 (TIMM8A or TIMM8B) and 3 copies of TIMM13, named soluble 70 kDa complex. Associates with the TIM22 complex, whose core is composed of TIMM22.

It localises to the mitochondrion inner membrane. Mitochondrial intermembrane chaperone that participates in the import and insertion of some multi-pass transmembrane proteins into the mitochondrial inner membrane. Also required for the transfer of beta-barrel precursors from the TOM complex to the sorting and assembly machinery (SAM complex) of the outer membrane. Acts as a chaperone-like protein that protects the hydrophobic precursors from aggregation and guide them through the mitochondrial intermembrane space. The TIMM8-TIMM13 complex mediates the import of some proteins while the predominant TIMM9-TIMM10 70 kDa complex mediates the import of much more proteins. The protein is Mitochondrial import inner membrane translocase subunit Tim13-A (timm13-a) of Xenopus laevis (African clawed frog).